Reading from the N-terminus, the 263-residue chain is 3-methyl-2-oxobutanoate hydroxymethyltransferase (263 aa).

Mg(2+)-binding residues include D44 and D83. Residues D44–S45, D83, and K112 each bind 3-methyl-2-oxobutanoate. E114 is a binding site for Mg(2+). E181 (proton acceptor) is an active-site residue.

The protein belongs to the PanB family. Homodecamer; pentamer of dimers. The cofactor is Mg(2+).

It is found in the cytoplasm. It carries out the reaction 3-methyl-2-oxobutanoate + (6R)-5,10-methylene-5,6,7,8-tetrahydrofolate + H2O = 2-dehydropantoate + (6S)-5,6,7,8-tetrahydrofolate. It functions in the pathway cofactor biosynthesis; (R)-pantothenate biosynthesis; (R)-pantoate from 3-methyl-2-oxobutanoate: step 1/2. Its function is as follows. Catalyzes the reversible reaction in which hydroxymethyl group from 5,10-methylenetetrahydrofolate is transferred onto alpha-ketoisovalerate to form ketopantoate. The chain is 3-methyl-2-oxobutanoate hydroxymethyltransferase from Nitrosospira multiformis (strain ATCC 25196 / NCIMB 11849 / C 71).